A 424-amino-acid polypeptide reads, in one-letter code: Putative chloroquine resistance transporter (424 aa).

The Cytoplasmic portion of the chain corresponds to 1-57 (MKILKKKKKGNQQIVPDERYRELDSHAPNENEIADEAPMSRKILYYLKLVYHEIREN). A helical transmembrane segment spans residues 58–78 (ITIYLLIILYLCVCVMNKIMA). Residues 79–89 (KRTLKKIGNYS) are Vacuolar-facing. An N-linked (GlcNAc...) asparagine glycan is attached at asparagine 87. The chain crosses the membrane as a helical span at residues 90 to 110 (FVTSETHNTICMVVFFSLYFI). Residues 111–124 (FGRRVTSAKERHQN) are Cytoplasmic-facing. A helical membrane pass occupies residues 125-145 (FGLQFLLISLLDACSVIIAFI). Over 146–153 (GLTRTTGN) the chain is Vacuolar. The helical transmembrane segment at 154–174 (IQSFVMQLSIPINMFFCFLIL) threads the bilayer. Residues 175 to 179 (RYRYH) are Cytoplasmic-facing. The chain crosses the membrane as a helical span at residues 180–200 (LFNYVGASIIVLTIAIVEFIL). The Vacuolar portion of the chain corresponds to 201–208 (SFETQEEN). A helical membrane pass occupies residues 209–229 (SIVFNLVLIASLIPMSFSNMT). Topologically, residues 230-246 (REIVFKKYKINILRLNA) are cytoplasmic. A helical transmembrane segment spans residues 247–267 (VVSFFQIFTSCLMLPMYTLPF). The Vacuolar portion of the chain corresponds to 268–316 (LKQINLPFSEIGTNIKNGFRCLILGQNTIVENCGLGMAKMCDDCEGAWK). Disulfide bonds link cysteine 288-cysteine 311 and cysteine 300-cysteine 308. Residues 317–337 (TFLAYSFFNICDNLITSFIID) traverse the membrane as a helical segment. The Cytoplasmic segment spans residues 338–345 (KFSTMTYT). Residues 346–366 (IVSCIQGPAIAIAYYFKFLAG) form a helical membrane-spanning segment. The Vacuolar segment spans residues 367–376 (DAVMKPRVLD). The helical transmembrane segment at 377-397 (FVTLFGYLFGSIIYRVGNIIL) threads the bilayer. Residues 398-424 (EKKKMMEAGNDDDSEGELTNAESIITQ) lie on the Cytoplasmic side of the membrane.

It belongs to the CRT-like transporter family.

The protein localises to the vacuole membrane. Functionally, nutrient transporter. Involved in maintaining the osmotic homeostasis of the digestive vacuole. The protein is Putative chloroquine resistance transporter of Plasmodium knowlesi.